The following is a 304-amino-acid chain: tRNA pseudouridine synthase B (304 aa).

D38 functions as the Nucleophile in the catalytic mechanism.

It belongs to the pseudouridine synthase TruB family. Type 1 subfamily.

The enzyme catalyses uridine(55) in tRNA = pseudouridine(55) in tRNA. Its function is as follows. Responsible for synthesis of pseudouridine from uracil-55 in the psi GC loop of transfer RNAs. This chain is tRNA pseudouridine synthase B, found in Listeria monocytogenes serotype 4b (strain F2365).